The sequence spans 85 residues: Sodium channel neurotoxin MeuNaTxalpha-2 (85 aa).

The N-terminal stretch at 1-19 (MNYLVMISLALLLMTGVES) is a signal peptide. The LCN-type CS-alpha/beta domain occupies 21–83 (RDAYIANDRN…VPIRIPGECR (63 aa)). Cystine bridges form between Cys-31–Cys-82, Cys-35–Cys-55, Cys-41–Cys-65, and Cys-45–Cys-67. Position 83 is an arginine amide (Arg-83).

The protein belongs to the long (4 C-C) scorpion toxin superfamily. Sodium channel inhibitor family. Alpha subfamily. In terms of tissue distribution, expressed by the venom gland.

The protein resides in the secreted. Alpha toxins bind voltage-independently at site-3 of sodium channels (Nav) and inhibit the inactivation of the activated channels, thereby blocking neuronal transmission. This toxin inhibits inactivation of Nav1.4/SCN4A (EC(50)=2.23 uM) and drosophila DmNav1 (EC(50)=220 nM). The toxin (1 uM) does not significantly shift the midpoint of activation at the two channels, but induces a significant depolarizing shift in the V(1/2) of inactivation of the channels. In addition, the toxin accelerates the recovery from fast inactivation in Nav1.4/SCN4A and DmNav1. It also shows antimicrobial activity. The chain is Sodium channel neurotoxin MeuNaTxalpha-2 from Mesobuthus eupeus (Lesser Asian scorpion).